A 760-amino-acid chain; its full sequence is Xaa-Pro dipeptidyl-peptidase (760 aa).

Catalysis depends on charge relay system residues S349, D469, and H499.

This sequence belongs to the peptidase S15 family. As to quaternary structure, homodimer.

The protein localises to the cytoplasm. It carries out the reaction Hydrolyzes Xaa-Pro-|- bonds to release unblocked, N-terminal dipeptides from substrates including Ala-Pro-|-p-nitroanilide and (sequentially) Tyr-Pro-|-Phe-Pro-|-Gly-Pro-|-Ile.. Removes N-terminal dipeptides sequentially from polypeptides having unsubstituted N-termini provided that the penultimate residue is proline. The polypeptide is Xaa-Pro dipeptidyl-peptidase (Streptococcus pyogenes serotype M5 (strain Manfredo)).